The chain runs to 302 residues: Bifunctional phosphoglucose/phosphomannose isomerase (302 aa).

The 134-residue stretch at 27–160 (VEGEVVRIEA…KVYGIDVKIP (134 aa)) folds into the SIS domain. D-fructose 6-phosphate contacts are provided by Gly47, Ser48, Ser87, Ser89, Thr92, and Arg135. Gly47, Ser48, Ser87, Ser89, Thr92, and Arg135 together coordinate D-glucose 6-phosphate. The Proton acceptor role is filled by Glu203. 2 residues coordinate D-fructose 6-phosphate: His219 and Lys298. Positions 219 and 298 each coordinate D-glucose 6-phosphate. His219 (proton donor) is an active-site residue. Lys298 serves as the catalytic Proton acceptor.

This sequence belongs to the PGI/PMI family. As to quaternary structure, homodimer.

It is found in the cytoplasm. The enzyme catalyses alpha-D-glucose 6-phosphate = beta-D-fructose 6-phosphate. The catalysed reaction is D-mannose 6-phosphate = D-fructose 6-phosphate. Inhibited by 5-phosphoarabinonate (PAB) and 6-phosphogluconate. In terms of biological role, dual specificity isomerase that catalyzes the isomerization of both glucose-6-phosphate and mannose-6-phosphate to fructose-6-phosphate with similar catalytic efficiency. The protein is Bifunctional phosphoglucose/phosphomannose isomerase of Pyrobaculum aerophilum (strain ATCC 51768 / DSM 7523 / JCM 9630 / CIP 104966 / NBRC 100827 / IM2).